Consider the following 419-residue polypeptide: Gamma-glutamyl phosphate reductase (419 aa).

Belongs to the gamma-glutamyl phosphate reductase family.

Its subcellular location is the cytoplasm. The enzyme catalyses L-glutamate 5-semialdehyde + phosphate + NADP(+) = L-glutamyl 5-phosphate + NADPH + H(+). Its pathway is amino-acid biosynthesis; L-proline biosynthesis; L-glutamate 5-semialdehyde from L-glutamate: step 2/2. In terms of biological role, catalyzes the NADPH-dependent reduction of L-glutamate 5-phosphate into L-glutamate 5-semialdehyde and phosphate. The product spontaneously undergoes cyclization to form 1-pyrroline-5-carboxylate. The chain is Gamma-glutamyl phosphate reductase from Maridesulfovibrio salexigens (strain ATCC 14822 / DSM 2638 / NCIMB 8403 / VKM B-1763) (Desulfovibrio salexigens).